Here is a 258-residue protein sequence, read N- to C-terminus: Ribose-5-phosphate isomerase (258 aa).

Belongs to the ribose 5-phosphate isomerase family.

The protein localises to the cytoplasm. It catalyses the reaction aldehydo-D-ribose 5-phosphate = D-ribulose 5-phosphate. The protein operates within carbohydrate degradation; pentose phosphate pathway; D-ribose 5-phosphate from D-ribulose 5-phosphate (non-oxidative stage): step 1/1. This chain is Ribose-5-phosphate isomerase (RKI1), found in Saccharomyces cerevisiae (strain YJM789) (Baker's yeast).